The chain runs to 83 residues: MAFKREIHGLVVKKAGDKTATILVERRVMHPRYRKFVKKFKKYLVHDEKNAVKIGDTISAVECRPLSAKKSFRLKAVLKAGVE.

This sequence belongs to the universal ribosomal protein uS17 family. Part of the 30S ribosomal subunit.

Functionally, one of the primary rRNA binding proteins, it binds specifically to the 5'-end of 16S ribosomal RNA. This Campylobacter hominis (strain ATCC BAA-381 / DSM 21671 / CCUG 45161 / LMG 19568 / NCTC 13146 / CH001A) protein is Small ribosomal subunit protein uS17.